The following is a 359-amino-acid chain: Medium-wave-sensitive opsin 1 (359 aa).

Residues M1–V47 lie on the Extracellular side of the membrane. Residues D12–P38 are required for 11-cis-retinal regeneration. An N-linked (GlcNAc...) asparagine glycan is attached at N29. A helical transmembrane segment spans residues Y48 to A72. The Cytoplasmic segment spans residues T73–N84. A helical membrane pass occupies residues W85 to I110. Residues Y111–E124 lie on the Extracellular side of the membrane. The cysteines at positions 121 and 198 are disulfide-linked. The chain crosses the membrane as a helical span at residues G125 to W144. Topologically, residues E145–L163 are cytoplasmic. A helical transmembrane segment spans residues A164–S187. Residues R188–S213 are Extracellular-facing. A helical transmembrane segment spans residues Y214–I241. Residues R242–R263 are Cytoplasmic-facing. A helical transmembrane segment spans residues M264–T287. At A288–H295 the chain is on the extracellular side. Residues P296–M320 form a helical membrane-spanning segment. K307 carries the post-translational modification N6-(retinylidene)lysine. Residues N321–A359 are Cytoplasmic-facing.

The protein belongs to the G-protein coupled receptor 1 family. Opsin subfamily. In terms of assembly, monomer. Homodimer. Homotetramer. Post-translationally, N-glycosylated. O-glycosylated. In terms of processing, phosphorylated on some or all of the serine and threonine residues present in the C-terminal region. In terms of tissue distribution, expressed in retina (at protein level). Expressed in cone photoreceptor cells (at protein level).

It is found in the cell membrane. In terms of biological role, visual pigments are the light-absorbing molecules that mediate vision. They consist of an apoprotein, opsin, covalently linked to cis-retinal. May increase spectral sensitivity in dim light. This Mus musculus (Mouse) protein is Medium-wave-sensitive opsin 1 (Opn1mw).